Reading from the N-terminus, the 51-residue chain is Large ribosomal subunit protein bL33 (51 aa).

The segment at methionine 1–aspartate 20 is disordered.

The protein belongs to the bacterial ribosomal protein bL33 family.

The polypeptide is Large ribosomal subunit protein bL33 (Psychromonas ingrahamii (strain DSM 17664 / CCUG 51855 / 37)).